Here is a 432-residue protein sequence, read N- to C-terminus: Sonic hedgehog protein (432 aa).

The N-terminal stretch at 1 to 26 (MDEMILLRRVLLAGFICALLVPSGLS) is a signal peptide. Residue C27 is the site of N-palmitoyl cysteine attachment. Positions 35 to 41 (TRKRFKK) match the Cardin-Weintraub motif. Ca(2+) is bound by residues E92, E93, D98, T128, E129, D132, and D134. Residues H143, D150, and H185 each contribute to the Zn(2+) site. G200 is lipidated: Cholesterol glycine ester.

This sequence belongs to the hedgehog family. As to quaternary structure, interacts with HHATL/GUP1 which negatively regulates HHAT-mediated palmitoylation of the SHH N-terminus. Interacts with BOC and CDON. Interacts with HHIP. Interacts with DISP1 via its cholesterol anchor. Interacts with SCUBE2. Multimer. The C-terminal domain displays an autoproteolysis activity and a cholesterol transferase activity. Both activities result in the cleavage of the full-length protein and covalent attachment of a cholesterol moiety to the C-terminal of the newly generated N-terminal fragment (ShhN). Cholesterylation is required for the sonic hedgehog protein N-product targeting to lipid rafts and multimerization. ShhN is the active species in both local and long-range signaling, whereas the C-product (ShhC) is degraded in the reticulum endoplasmic. In terms of processing, N-palmitoylation by HHAT of ShhN is required for sonic hedgehog protein N-product multimerization and full activity. It is a prerequisite for the membrane-proximal positioning and the subsequent shedding of this N-terminal peptide. Post-translationally, the lipidated N- and C-terminal peptides of ShhNp can be cleaved (shedding). The N-terminal palmitoylated peptide is cleaved at the Cardin-Weintraub (CW) motif site. The cleavage reduced the interactions with heparan sulfate. The cleavage is enhanced by SCUBE2.

The protein resides in the endoplasmic reticulum membrane. Its subcellular location is the golgi apparatus membrane. It localises to the cell membrane. It carries out the reaction glycyl-L-cysteinyl-[protein] + cholesterol + H(+) = [protein]-C-terminal glycyl cholesterol ester + N-terminal L-cysteinyl-[protein]. Its function is as follows. The C-terminal part of the sonic hedgehog protein precursor displays an autoproteolysis and a cholesterol transferase activity. Both activities result in the cleavage of the full-length protein into two parts (ShhN and ShhC) followed by the covalent attachment of a cholesterol moiety to the C-terminal of the newly generated ShhN. Both activities occur in the endoplasmic reticulum. Once cleaved, ShhC is degraded in the endoplasmic reticulum. The dually lipidated sonic hedgehog protein N-product (ShhNp) is a morphogen which is essential for a variety of patterning events during development. Induces ventral cell fate in the neural tube and somites. Involved in the patterning of the anterior-posterior axis of the developing limb bud. Essential for axon guidance. Binds to the patched (PTCH1) receptor, which functions in association with smoothened (SMO), to activate the transcription of target genes. In the absence of SHH, PTCH1 represses the constitutive signaling activity of SMO. This is Sonic hedgehog protein from Cynops pyrrhogaster (Japanese fire-bellied newt).